A 99-amino-acid chain; its full sequence is Prostate and testis expressed protein 4 (99 aa).

The N-terminal stretch at 1-23 (MNSVTKISTLLIVILSFLCFVEG) is a signal peptide. The 76-residue stretch at 24-99 (LICNSCEKSR…CCEKNLCNSF (76 aa)) folds into the UPAR/Ly6 domain. Disulfide bonds link Cys-26/Cys-52, Cys-29/Cys-37, Cys-44/Cys-70, and Cys-74/Cys-90.

In terms of tissue distribution, expressed in prostate, testis, eye, kidney and skeletal muscle. Expressed in the dorsal lobe of prostate. Not expressed in the ventral lobe of prostate.

The protein resides in the secreted. Its function is as follows. Enhances sperm motility. Binds to calmodulin and inhibits calcium transport into spermatozoa. May modulate the function of nicotinic acetylcholine receptors. The sequence is that of Prostate and testis expressed protein 4 (Pate4) from Mus musculus (Mouse).